The following is a 217-amino-acid chain: Thiopurine S-methyltransferase (217 aa).

S-adenosyl-L-methionine contacts are provided by Trp-10, Leu-45, Glu-66, and Arg-127.

The protein belongs to the class I-like SAM-binding methyltransferase superfamily. TPMT family.

The protein localises to the cytoplasm. The enzyme catalyses S-adenosyl-L-methionine + a thiopurine = S-adenosyl-L-homocysteine + a thiopurine S-methylether.. This chain is Thiopurine S-methyltransferase, found in Acinetobacter baylyi (strain ATCC 33305 / BD413 / ADP1).